Reading from the N-terminus, the 469-residue chain is 3-isopropylmalate dehydratase large subunit (469 aa).

3 residues coordinate [4Fe-4S] cluster: Cys347, Cys410, and Cys413.

The protein belongs to the aconitase/IPM isomerase family. LeuC type 1 subfamily. In terms of assembly, heterodimer of LeuC and LeuD. It depends on [4Fe-4S] cluster as a cofactor.

It carries out the reaction (2R,3S)-3-isopropylmalate = (2S)-2-isopropylmalate. It participates in amino-acid biosynthesis; L-leucine biosynthesis; L-leucine from 3-methyl-2-oxobutanoate: step 2/4. Its function is as follows. Catalyzes the isomerization between 2-isopropylmalate and 3-isopropylmalate, via the formation of 2-isopropylmaleate. This Burkholderia ambifaria (strain MC40-6) protein is 3-isopropylmalate dehydratase large subunit.